The following is a 486-amino-acid chain: Betaine aldehyde dehydrogenase (486 aa).

Residues Thr23 and Asp90 each contribute to the K(+) site. An NAD(+)-binding site is contributed by 147 to 149 (GAW). Lys159 acts as the Charge relay system in catalysis. Residues 173–176 (KPSE) and 226–229 (ESGT) contribute to the NAD(+) site. A K(+)-binding site is contributed by Leu241. Glu247 functions as the Proton acceptor in the catalytic mechanism. The NAD(+) site is built by Gly249, Cys281, and Glu382. The Nucleophile role is filled by Cys281. Cysteine sulfenic acid (-SOH) is present on Cys281. Residues Lys452 and Gly455 each coordinate K(+). The active-site Charge relay system is Glu459.

It belongs to the aldehyde dehydrogenase family. As to quaternary structure, dimer of dimers. The cofactor is K(+).

It catalyses the reaction betaine aldehyde + NAD(+) + H2O = glycine betaine + NADH + 2 H(+). The protein operates within amine and polyamine biosynthesis; betaine biosynthesis via choline pathway; betaine from betaine aldehyde: step 1/1. Involved in the biosynthesis of the osmoprotectant glycine betaine. Catalyzes the irreversible oxidation of betaine aldehyde to the corresponding acid. In Vibrio campbellii (strain ATCC BAA-1116), this protein is Betaine aldehyde dehydrogenase.